Here is a 166-residue protein sequence, read N- to C-terminus: MALRLEDKKAIVAEVNEAAKGALSAVAADSRGVTVGAMTGLRKKAREAGVYVRVVRNTLARRAVEGTAFECLAETFTGPTLIAFSLEHPGAAARLLKDFAKEQANFEVKGAAFEGNFIPAAEIDRLAKLPTYEEALAQLMMTMKEASAGKFVRTLAALRDQKQEAA.

The protein belongs to the universal ribosomal protein uL10 family. As to quaternary structure, part of the ribosomal stalk of the 50S ribosomal subunit. The N-terminus interacts with L11 and the large rRNA to form the base of the stalk. The C-terminus forms an elongated spine to which L12 dimers bind in a sequential fashion forming a multimeric L10(L12)X complex.

Functionally, forms part of the ribosomal stalk, playing a central role in the interaction of the ribosome with GTP-bound translation factors. In Shewanella baltica (strain OS223), this protein is Large ribosomal subunit protein uL10.